Reading from the N-terminus, the 250-residue chain is MNILITNDDGIASSGIKALEAVLQKEHDTFLIAPLRERSATSMALSIYDSMRVERINDNHYIVDGYPADCVNIGLHGDIFPRIDLVLSGINRGVNMGHDIHYSGTVGAARHGAVHSRLSLAVSSGNITKDYDYIREAEFVRHFIDEYSSLLKVGVVYNMNIPFDFVSSMENLRITRLGKRTYEDTYSKKNIIGGIADFYLGGSKLEHATEEGTDFTAFFSGKISLTPLSLDQTDISLVQELSDTLSKSLS.

Residues Asp-8, Asp-9, Ser-39, and Asn-91 each contribute to the a divalent metal cation site.

It belongs to the SurE nucleotidase family. Requires a divalent metal cation as cofactor.

It localises to the cytoplasm. The catalysed reaction is a ribonucleoside 5'-phosphate + H2O = a ribonucleoside + phosphate. Its function is as follows. Nucleotidase that shows phosphatase activity on nucleoside 5'-monophosphates. The protein is 5'-nucleotidase SurE of Leptospira borgpetersenii serovar Hardjo-bovis (strain JB197).